Consider the following 695-residue polypeptide: Follicle-stimulating hormone receptor (695 aa).

The N-terminal stretch at 1–17 (MALLLVSLLAFLSLGSG) is a signal peptide. Intrachain disulfides connect C18-C25 and C23-C32. In terms of domain architecture, LRRNT spans 18-46 (CHHRICHCSNRVFLCQESKVTEIPSDLPR). At 18–366 (CHHRICHCSN…EDIMGYNILR (349 aa)) the chain is on the extracellular side. LRR repeat units follow at residues 49–72 (IELR…FGDL), 73–97 (EKIE…LPKL), 98–118 (HEIR…AFQN), 119–143 (LPNL…KIHS), 144–169 (LQKV…VGLS), 170–192 (FESV…AFNG), 193–216 (TQLD…VFHG), 217–240 (ASGP…GLEN), and 241–259 (LKKL…PTLE). N191 and N199 each carry an N-linked (GlcNAc...) asparagine glycan. Intrachain disulfides connect C275–C346, C276–C292, C276–C356, and C292–C338. 2 N-linked (GlcNAc...) asparagine glycosylation sites follow: N293 and N318. Y335 is subject to Sulfotyrosine. A helical transmembrane segment spans residues 367–387 (VLIWFISILAITGNIIVLVIL). The Cytoplasmic portion of the chain corresponds to 388 to 398 (TTSQYKLTVPR). Residues 399 to 421 (FLMCNLAFADLCIGIYLLLIASV) form a helical membrane-spanning segment. Over 422–443 (DIHTKSQYHNYAIDWQTGAGCD) the chain is Extracellular. C442 and C517 form a disulfide bridge. The helical transmembrane segment at 444 to 465 (AAGFFTVFASELSVYTLTAITL) threads the bilayer. Residues 466-485 (ERWHTITHAMQLDCKVQLRH) lie on the Cytoplasmic side of the membrane. Residues 486–508 (AASVMVMGWIFAFAAALFPIFGI) form a helical membrane-spanning segment. Residues 509–528 (SSYMKVSICLPMDIDSPLSQ) are Extracellular-facing. Residues 529-550 (LYVMSLLVLNVLAFVVICGCYI) traverse the membrane as a helical segment. The Cytoplasmic segment spans residues 551–573 (HIYLTVRNPNIVSSSSDTRIAKR). Residues 574 to 597 (MAMLIFTDFLCMAPISFFAISASL) traverse the membrane as a helical segment. Residues 598–608 (KVPLITVSKAK) lie on the Extracellular side of the membrane. The helical transmembrane segment at 609 to 630 (ILLVLFHPINSCANPFLYAIFT) threads the bilayer. The Cytoplasmic portion of the chain corresponds to 631 to 695 (KNFRRDFFIL…LVPLSHLAQN (65 aa)).

This sequence belongs to the G-protein coupled receptor 1 family. FSH/LSH/TSH subfamily. In terms of assembly, homotrimer. Functions as a homotrimer binding the FSH hormone heterodimer composed of CGA and FSHB. Interacts with ARRB2. Interacts with APPL2; interaction is independent of follicle stimulating hormone stimulation. Sulfated. In terms of processing, N-glycosylated; indirectly required for FSH-binding, possibly via a conformational change that allows high affinity binding of hormone. As to expression, sertoli cells and ovarian granulosa cells.

The protein resides in the cell membrane. Functionally, g protein-coupled receptor for follitropin, the follicle-stimulating hormone. Through cAMP production activates the downstream PI3K-AKT and ERK1/ERK2 signaling pathways. The protein is Follicle-stimulating hormone receptor (FSHR) of Homo sapiens (Human).